The chain runs to 381 residues: Creatine kinase M-type (381 aa).

Residues 11-98 form the Phosphagen kinase N-terminal domain; it reads KLNYSAAEEF…FDPVIEDRHG (88 aa). One can recognise a Phosphagen kinase C-terminal domain in the interval 125–367; it reads YVLSSRVRTG…KLMVEMEKRL (243 aa). Residues 128 to 132, His-191, Arg-236, Arg-292, 320 to 325, and Asp-335 each bind ATP; these read SSRVR and RGTGGV.

Belongs to the ATP:guanido phosphotransferase family. In terms of assembly, dimer of identical or non-identical chains. With MM being the major form in skeletal muscle and myocardium, MB existing in myocardium, and BB existing in many tissues, especially brain.

Its subcellular location is the cytoplasm. The catalysed reaction is creatine + ATP = N-phosphocreatine + ADP + H(+). Reversibly catalyzes the transfer of phosphate between ATP and various phosphogens (e.g. creatine phosphate). Creatine kinase isoenzymes play a central role in energy transduction in tissues with large, fluctuating energy demands, such as skeletal muscle, heart, brain and spermatozoa. In Torpedo marmorata (Marbled electric ray), this protein is Creatine kinase M-type.